Consider the following 2464-residue polypeptide: Nonribosomal peptide synthetase NPS2 (2464 aa).

Positions 275–670 (DDHHPGTSQP…GRIDTQIKLR (396 aa)) are adenylation 1. The Carrier 1 domain occupies 814–888 (TKAEGQLLEI…QIAKALDASS (75 aa)). The residue at position 848 (serine 848) is an O-(pantetheine 4'-phosphoryl)serine. Residues 924 to 1325 (IYPPFPLQEG…EGLALDLAQG (402 aa)) form a condensation 1 region. Residues 1364 to 1437 (EDLLLRLRKI…RMAASAGKKI (74 aa)) enclose the Carrier 2 domain. Serine 1398 is modified (O-(pantetheine 4'-phosphoryl)serine). The tract at residues 1479–1887 (DVFPVTTLQA…LRVLVDDLDA (409 aa)) is condensation 2. The Carrier 3 domain occupies 1917–1993 (SSWDEKSSTL…DLVMRAGAED (77 aa)). Serine 1954 bears the O-(pantetheine 4'-phosphoryl)serine mark. The segment at 2047-2340 (GGSRYQHVFG…ATQIQDDLRE (294 aa)) is condensation 3.

The protein belongs to the NRP synthetase family.

The protein operates within siderophore biosynthesis. Its function is as follows. Nonribosomal peptide synthetase; part of the siderophore basidioferrin biosynthetic pathway. The biosynthesis of basidioferrin depends on the hydroxylation of ornithine to N(5)-hydroxyornithine, catalyzed by the monooxygenase SMO1. The second step, the acylation of N(5)-hydroxy-L-ornithine is catalyzed by a not yet identified N-acyltransferase. Finally, assembly of basidioferrin is catalyzed by the nonribosomal peptide synthase (NRPS) NPS2 via amide bond formation between three L-AHO molecules to release the linear L-AHO trimer. N-5-acetyl-N-5-hydroxy-L-ornithine (L-AHO) and N-5-cis-anhydromevalonyl-N-5-hydroxy-L-ornithine (L-AMHO) are accepted as the substrates by the NPS2 adenylation (A) domain, but only L-AHO is trimerized. The protein is Nonribosomal peptide synthetase NPS2 of Ceriporiopsis subvermispora (strain B) (White-rot fungus).